Reading from the N-terminus, the 1382-residue chain is Insulin receptor (1382 aa).

Residues 1-27 (MATGGRRGAAAAPLLVAVAALLLGAAG) form the signal peptide. Extracellular-side segments run 28–758 (HLYP…PRPS) and 763–956 (SLGD…NIAK). A disulfide bridge links cysteine 35 with cysteine 53. Residues asparagine 43, asparagine 52, asparagine 105, and asparagine 138 are each glycosylated (N-linked (GlcNAc...) asparagine). 9 disulfide bridges follow: cysteine 153-cysteine 182, cysteine 186-cysteine 209, cysteine 196-cysteine 215, cysteine 219-cysteine 228, cysteine 223-cysteine 234, cysteine 235-cysteine 243, cysteine 239-cysteine 252, cysteine 255-cysteine 264, and cysteine 268-cysteine 280. Asparagine 242 is a glycosylation site (N-linked (GlcNAc...) asparagine). Asparagine 282 carries N-linked (GlcNAc...) asparagine glycosylation. Cystine bridges form between cysteine 286/cysteine 311, cysteine 293/cysteine 301, cysteine 315/cysteine 328, cysteine 331/cysteine 335, and cysteine 339/cysteine 360. A glycan (N-linked (GlcNAc...) asparagine) is linked at asparagine 322. A glycan (N-linked (GlcNAc...) asparagine) is linked at asparagine 364. Phosphoserine is present on serine 400. Tyrosine 401 carries the post-translational modification Phosphotyrosine. A Phosphoserine modification is found at serine 407. N-linked (GlcNAc...) asparagine glycosylation is found at asparagine 424 and asparagine 445. Cysteine 462 and cysteine 495 are joined by a disulfide. N-linked (GlcNAc...) asparagine glycans are attached at residues asparagine 541, asparagine 633, asparagine 651, and asparagine 698. Positions 624–726 (VPLDPISVSN…SQILKELEES (103 aa)) constitute a Fibronectin type-III 1 domain. Cystine bridges form between cysteine 674-cysteine 899 and cysteine 825-cysteine 834. The disordered stretch occupies residues 686–708 (SPPFESEDSQKHNQSEYEDSAGE). The insulin-binding stretch occupies residues 733 to 741 (EDYLHNVVF). Residues 746–766 (TSSGTGAEDPRPSRKRRSLGD) form a disordered region. Fibronectin type-III domains are found at residues 757-842 (PSRK…YVSA) and 853-947 (IVGP…VTDY). 2 N-linked (GlcNAc...) asparagine glycosylation sites follow: asparagine 769 and asparagine 782. N-linked (GlcNAc...) asparagine glycosylation is found at asparagine 920 and asparagine 933. The helical transmembrane segment at 957-979 (IIIGPLIFVFLFSVVIGSIYLFL) threads the bilayer. Residues 980 to 1382 (RKRQPDGPLG…ILTLPRSNPS (403 aa)) are Cytoplasmic-facing. Phosphotyrosine; by autocatalysis is present on residues tyrosine 992, tyrosine 999, and tyrosine 1011. A region of interest (important for interaction with IRS1, SHC1 and STAT5B) is located at residue tyrosine 999. Positions 1023 to 1298 (ITLLRELGQG…LLKDDLHPSF (276 aa)) constitute a Protein kinase domain. ATP-binding residues include serine 1033 and lysine 1057. A Glycyl lysine isopeptide (Lys-Gly) (interchain with G-Cter in ubiquitin) cross-link involves residue lysine 1079. Position 1083 is an S-nitrosocysteine (cysteine 1083). Position 1104 to 1110 (1104 to 1110 (ELMAHGD)) interacts with ATP. The active-site Proton donor/acceptor is aspartate 1159. ATP-binding positions include 1163–1164 (RN) and aspartate 1177. Phosphotyrosine; by autocatalysis occurs at positions 1185, 1189, 1190, 1355, and 1361. The interval 1360–1382 (PYTHMNGGKKNGRILTLPRSNPS) is disordered. The PIK3R1-binding stretch occupies residues 1361–1364 (YTHM).

This sequence belongs to the protein kinase superfamily. Tyr protein kinase family. Insulin receptor subfamily. In terms of assembly, tetramer of 2 alpha and 2 beta chains linked by disulfide bonds. The alpha chains carry the insulin-binding regions, while the beta chains carry the kinase domain. Forms a hybrid receptor with IGF1R, the hybrid is a tetramer consisting of 1 alpha chain and 1 beta chain of INSR and 1 alpha chain and 1 beta chain of IGF1R. Interacts with SORBS1 but dissociates from it following insulin stimulation. Binds SH2B2. Activated form of INSR interacts (via Tyr-999) with the PTB/PID domains of IRS1 and SHC1. The sequences surrounding the phosphorylated NPXY motif contribute differentially to either IRS1 or SHC1 recognition. Interacts (via tyrosines in the C-terminus) with IRS2 (via PTB domain and 591-786 AA); the 591-786 would be the primary anchor of IRS2 to INSR while the PTB domain would have a stabilizing action on the interaction with INSR. Interacts with the SH2 domains of the 85 kDa regulatory subunit of PI3K (PIK3R1) in vitro, when autophosphorylated on tyrosine residues. Interacts with SOCS7. Interacts (via the phosphorylated Tyr-999), with SOCS3. Interacts (via the phosphorylated Tyr-1185, Tyr-1189, Tyr-1190) with SOCS1. Interacts with CAV2 (tyrosine-phosphorylated form); the interaction is increased with 'Tyr-27'phosphorylation of CAV2. Interacts with ARRB2. Interacts with GRB10; this interaction blocks the association between IRS1/IRS2 and INSR, significantly reduces insulin-stimulated tyrosine phosphorylation of IRS1 and IRS2 and thus decreases insulin signaling. Interacts with GRB7. Interacts with PDPK1. Interacts (via Tyr-1190) with GRB14 (via BPS domain); this interaction protects the tyrosines in the activation loop from dephosphorylation, but promotes dephosphorylation of Tyr-999, this results in decreased interaction with, and phosphorylation of, IRS1. Interacts (via subunit alpha) with ENPP1 (via 485-599 AA); this interaction blocks autophosphorylation. Interacts with PTPRE; this interaction is dependent of Tyr-1185, Tyr-1189 and Tyr-1190 of the INSR. Interacts with STAT5B (via SH2 domain). Interacts with PTPRF. Interacts with ATIC; ATIC together with PRKAA2/AMPK2 and HACD3/PTPLAD1 is proposed to be part of a signaling netwok regulating INSR autophosphorylation and endocytosis. Interacts with the cone snail venom insulin Con-Ins G1. Interacts with the insulin receptor SORL1; this interaction strongly increases its surface exposure, hence strengthens insulin signal reception. Interacts (tyrosine phosphorylated) with CCDC88A/GIV (via SH2-like region); binding requires autophosphorylation of the INSR C-terminal region. Interacts with GNAI3; the interaction is probably mediated by CCDC88A/GIV. Interacts with LMBRD1. Interacts (in response to insulin stimulation) with NCK1; this interaction may recruit PTPN1 to mediate INSR dephosphorylation. Interacts with CD248; this interaction diminishes INSR autophosphorylation. After being transported from the endoplasmic reticulum to the Golgi apparatus, the single glycosylated precursor is further glycosylated and then cleaved, followed by its transport to the plasma membrane. Post-translationally, autophosphorylated on tyrosine residues in response to insulin. Phosphorylation of Tyr-999 is required for binding to IRS1, SHC1 and STAT5B. Dephosphorylated by PTPRE at Tyr-999, Tyr-1185, Tyr-1189 and Tyr-1190. May also be phosphorylated at Tyr-1185 and Tyr-1190 by mTORC2. Dephosphorylated by PTPRF and PTPN1. Dephosphorylated by PTPN2; down-regulates insulin-induced signaling. Dephosphorylation at Tyr-1189 and Tyr-1190 requires the SH2/SH3 adapter protein NCK1, probably to recruit its interaction partner PTPN1. In terms of processing, S-nitrosylation at Cys-1083 by BLVRB inhibits the receptor tyrosine kinase, thereby inhibiting insulin signaling. Ubiquitinated by MARCHF1; leading to degradation thereby reducing surface INSR expression. Isoform Long and isoform Short are predominantly expressed in tissue targets of insulin metabolic effects: liver, adipose tissue and skeletal muscle but are also expressed in the peripheral nerve, kidney, pulmonary alveoli, pancreatic acini, placenta vascular endothelium, fibroblasts, monocytes, granulocytes, erythrocytes and skin. Isoform Short is preferentially expressed in fetal cells such as fetal fibroblasts, muscle, liver and kidney. Found as a hybrid receptor with IGF1R in muscle, heart, kidney, adipose tissue, skeletal muscle, hepatoma, fibroblasts, spleen and placenta (at protein level). Overexpressed in several tumors, including breast, colon, lung, ovary, and thyroid carcinomas.

Its subcellular location is the cell membrane. The protein localises to the late endosome. It localises to the lysosome. It catalyses the reaction L-tyrosyl-[protein] + ATP = O-phospho-L-tyrosyl-[protein] + ADP + H(+). Activated in response to insulin. Autophosphorylation activates the kinase activity. PTPN1, PTPRE and PTPRF dephosphorylate important tyrosine residues, thereby reducing INSR activity. Inhibited by ENPP1. GRB10 and GRB14 inhibit the catalytic activity of the INSR, they block access of substrates to the activated receptor. SOCS1 and SOCS3 act as negative regulators of INSR activity, they bind to the activated INRS and interfere with the phosphorylation of INSR substrates. Receptor tyrosine kinase which mediates the pleiotropic actions of insulin. Binding of insulin leads to phosphorylation of several intracellular substrates, including, insulin receptor substrates (IRS1, 2, 3, 4), SHC, GAB1, CBL and other signaling intermediates. Each of these phosphorylated proteins serve as docking proteins for other signaling proteins that contain Src-homology-2 domains (SH2 domain) that specifically recognize different phosphotyrosine residues, including the p85 regulatory subunit of PI3K and SHP2. Phosphorylation of IRSs proteins lead to the activation of two main signaling pathways: the PI3K-AKT/PKB pathway, which is responsible for most of the metabolic actions of insulin, and the Ras-MAPK pathway, which regulates expression of some genes and cooperates with the PI3K pathway to control cell growth and differentiation. Binding of the SH2 domains of PI3K to phosphotyrosines on IRS1 leads to the activation of PI3K and the generation of phosphatidylinositol-(3, 4, 5)-triphosphate (PIP3), a lipid second messenger, which activates several PIP3-dependent serine/threonine kinases, such as PDPK1 and subsequently AKT/PKB. The net effect of this pathway is to produce a translocation of the glucose transporter SLC2A4/GLUT4 from cytoplasmic vesicles to the cell membrane to facilitate glucose transport. Moreover, upon insulin stimulation, activated AKT/PKB is responsible for: anti-apoptotic effect of insulin by inducing phosphorylation of BAD; regulates the expression of gluconeogenic and lipogenic enzymes by controlling the activity of the winged helix or forkhead (FOX) class of transcription factors. Another pathway regulated by PI3K-AKT/PKB activation is mTORC1 signaling pathway which regulates cell growth and metabolism and integrates signals from insulin. AKT mediates insulin-stimulated protein synthesis by phosphorylating TSC2 thereby activating mTORC1 pathway. The Ras/RAF/MAP2K/MAPK pathway is mainly involved in mediating cell growth, survival and cellular differentiation of insulin. Phosphorylated IRS1 recruits GRB2/SOS complex, which triggers the activation of the Ras/RAF/MAP2K/MAPK pathway. In addition to binding insulin, the insulin receptor can bind insulin-like growth factors (IGFI and IGFII). Isoform Short has a higher affinity for IGFII binding. When present in a hybrid receptor with IGF1R, binds IGF1. PubMed:12138094 shows that hybrid receptors composed of IGF1R and INSR isoform Long are activated with a high affinity by IGF1, with low affinity by IGF2 and not significantly activated by insulin, and that hybrid receptors composed of IGF1R and INSR isoform Short are activated by IGF1, IGF2 and insulin. In contrast, PubMed:16831875 shows that hybrid receptors composed of IGF1R and INSR isoform Long and hybrid receptors composed of IGF1R and INSR isoform Short have similar binding characteristics, both bind IGF1 and have a low affinity for insulin. In adipocytes, inhibits lipolysis. The chain is Insulin receptor (INSR) from Homo sapiens (Human).